Here is a 255-residue protein sequence, read N- to C-terminus: Hydroxyacylglutathione hydrolase (255 aa).

Positions 56, 58, 60, 61, 114, 133, and 171 each coordinate Zn(2+).

It belongs to the metallo-beta-lactamase superfamily. Glyoxalase II family. In terms of assembly, monomer. The cofactor is Zn(2+).

It catalyses the reaction an S-(2-hydroxyacyl)glutathione + H2O = a 2-hydroxy carboxylate + glutathione + H(+). It functions in the pathway secondary metabolite metabolism; methylglyoxal degradation; (R)-lactate from methylglyoxal: step 2/2. In terms of biological role, thiolesterase that catalyzes the hydrolysis of S-D-lactoyl-glutathione to form glutathione and D-lactic acid. This is Hydroxyacylglutathione hydrolase from Chelativorans sp. (strain BNC1).